Reading from the N-terminus, the 356-residue chain is 3'-5' exonuclease (356 aa).

Residues 1 to 120 (MDKYLIKMPT…TPSPEKEKPE (120 aa)) are disordered. Basic and acidic residues-rich tracts occupy residues 29–56 (TIDK…ENTP) and 71–85 (KNQD…IKNE). Over residues 99-113 (LTRSTRSMAEEGTPS) the composition is skewed to low complexity. Residues Ser105 and Ser113 each carry the phosphoserine modification. Residues 155-316 (TTLDVVPMAF…GQVIYRDLEQ (162 aa)) form the 3'-5' exonuclease domain. 3 residues coordinate Mg(2+): Asp165, Glu167, and Asp303.

This sequence belongs to the WRNexo family.

Its subcellular location is the nucleus. Has exonuclease activity on both single-stranded and duplex templates bearing overhangs, but not blunt ended duplex DNA, and cleaves in a 3'-5' direction. Essential for the formation of DNA replication focal centers. Has an important role in maintaining genome stability. This chain is 3'-5' exonuclease, found in Drosophila willistoni (Fruit fly).